A 160-amino-acid chain; its full sequence is Small ribosomal subunit protein uS9 (160 aa).

Residues 1–18 show a composition bias toward polar residues; that stretch reads MTDTSNSLQDLGTLTGAP. The interval 1–37 is disordered; the sequence is MTDTSNSLQDLGTLTGAPSAQPVKSVEPKIDAQGRAY.

This sequence belongs to the universal ribosomal protein uS9 family.

This is Small ribosomal subunit protein uS9 from Hyphomonas neptunium (strain ATCC 15444).